A 201-amino-acid polypeptide reads, in one-letter code: Ras-related protein Rab-1B (201 aa).

M1 carries the N-acetylmethionine modification. GTP is bound by residues S17, G18, V19, G20, K21, S22, C23, Y33, T34, E35, S36, S39, and T40. S22 provides a ligand contact to Mg(2+). A Switch 1 motif is present at residues 30–45; the sequence is DDTYTESYISTIGVDF. Mg(2+) contacts are provided by T40 and D63. Residues 64 to 83 are switch 2 region; required for interaction with REP1/CHM; that stretch reads TAGQERFRTVTSSYYRGAHG. Residues 65-80 carry the Switch 2 motif; that stretch reads AGQERFRTVTSSYYRG. The GTP site is built by G66, N121, K122, D124, S151, A152, and K153. Residues 173–201 are disordered; the sequence is MGPGAASGGERPNLKIDSTPVKSASGGCC. Residues C200 and C201 are each lipidated (S-geranylgeranyl cysteine). At C201 the chain carries Cysteine methyl ester.

The protein belongs to the small GTPase superfamily. Rab family. In terms of assembly, interacts with MICAL1 and MICAL2. Interacts (in GTP-bound form) with MICALCL, MICAL1 and MILCAL3. Interacts with GDI1; the interaction requires the GDP-bound state. Interacts with CHM/REP1; the interaction requires the GDP-bound form and is necessary for prenylation by GGTase II. Interacts with RabGAP TBC1D20. Interacts (in GDP-bound form) with lipid phosphatase MTMR6 (via GRAM domain); the interaction regulates MTMR6 recruitment to the endoplasmic reticulum-Golgi intermediate compartment. Interacts (in GDP-bound form) with lipid phosphatase MTMR7. Requires Mg(2+) as cofactor. Post-translationally, prenylated; by GGTase II, only after interaction of the substrate with Rab escort protein 1 (REP1).

The protein localises to the cytoplasm. It localises to the membrane. The protein resides in the preautophagosomal structure membrane. Its subcellular location is the perinuclear region. The enzyme catalyses GTP + H2O = GDP + phosphate + H(+). Its activity is regulated as follows. Regulated by guanine nucleotide exchange factors (GEFs) which promote the exchange of bound GDP for free GTP. Regulated by GTPase activating proteins (GAPs) including TBC1D20 which increases the GTP hydrolysis activity. Inhibited by GDP dissociation inhibitors (GDIs). The small GTPases Rab are key regulators of intracellular membrane trafficking, from the formation of transport vesicles to their fusion with membranes. Rabs cycle between an inactive GDP-bound form and an active GTP-bound form that is able to recruit to membranes different set of downstream effectors directly responsible for vesicle formation, movement, tethering and fusion. Plays a role in the initial events of the autophagic vacuole development which take place at specialized regions of the endoplasmic reticulum. Regulates vesicular transport between the endoplasmic reticulum and successive Golgi compartments. Required to modulate the compacted morphology of the Golgi. Promotes the recruitment of lipid phosphatase MTMR6 to the endoplasmic reticulum-Golgi intermediate compartment. This Rattus norvegicus (Rat) protein is Ras-related protein Rab-1B (Rab1b).